The following is a 102-amino-acid chain: UPF0213 protein XCC3072 (102 aa).

Residues 5–80 form the GIY-YIG domain; that stretch reads KPWHLYLLLC…KQQPRARKLA (76 aa).

The protein belongs to the UPF0213 family.

This Xanthomonas campestris pv. campestris (strain ATCC 33913 / DSM 3586 / NCPPB 528 / LMG 568 / P 25) protein is UPF0213 protein XCC3072.